The primary structure comprises 376 residues: uncharacterized protein (376 aa).

Belongs to the NAD(P)-dependent epimerase/dehydratase family.

This is an uncharacterized protein from Mycobacterium bovis (strain ATCC BAA-935 / AF2122/97).